Here is a 139-residue protein sequence, read N- to C-terminus: ATP synthase epsilon chain (139 aa).

It belongs to the ATPase epsilon chain family. In terms of assembly, F-type ATPases have 2 components, CF(1) - the catalytic core - and CF(0) - the membrane proton channel. CF(1) has five subunits: alpha(3), beta(3), gamma(1), delta(1), epsilon(1). CF(0) has three main subunits: a, b and c.

The protein resides in the cell inner membrane. Produces ATP from ADP in the presence of a proton gradient across the membrane. This Erwinia tasmaniensis (strain DSM 17950 / CFBP 7177 / CIP 109463 / NCPPB 4357 / Et1/99) protein is ATP synthase epsilon chain.